A 1095-amino-acid polypeptide reads, in one-letter code: Actin cross-linking toxin VgrG1 (1095 aa).

The 384-residue stretch at Thr-712–Val-1095 folds into the ACD domain. ATP is bound at residue Ser-723 to Glu-727. Positions 727 and 789 each coordinate Mg(2+). An ATP-binding site is contributed by Ser-792. Gln-873 provides a ligand contact to Mg(2+). An ATP-binding site is contributed by Arg-979. Position 1050 (Glu-1050) interacts with Mg(2+).

This sequence belongs to the VgrG protein family. Interacts with protein VC1417. Mg(2+) is required as a cofactor.

It is found in the secreted. The protein localises to the host cytoplasm. The protein resides in the host cytosol. Its function is as follows. Part of the type VI secretion system (T6SS) specialized secretion system, which delivers several virulence factors in both prokaryotic and eukaryotic cells during infection. Forms the spike at the tip of the elongating tube probably formed by hemolysin co-regulated protein/Hcp. Allows the delivery of the TseL antibacterial toxin to target cells where it exerts its toxicity. Also acts directly as an actin-directed toxin that catalyzes the covalent cross-linking of host cytoplasmic monomeric actin. Mediates the cross-link between 'Lys-50' of one monomer and 'Glu-270' of another actin monomer, resulting in formation of highly toxic actin oligomers that cause cell rounding. The toxin can be highly efficient at very low concentrations by acting on formin homology family proteins: toxic actin oligomers bind with high affinity to formins and adversely affect both nucleation and elongation abilities of formins, causing their potent inhibition in both profilin-dependent and independent manners. Acts as an acid--amino-acid ligase that transfers the gamma-phosphoryl group of ATP to the 'Glu-270' actin residue, resulting in the formation of an activated acyl phosphate intermediate. This intermediate is further hydrolyzed and the energy of hydrolysis is utilized for the formation of the amide bond between actin subunits. The sequence is that of Actin cross-linking toxin VgrG1 from Vibrio cholerae serotype O1 (strain ATCC 39541 / Classical Ogawa 395 / O395).